Consider the following 130-residue polypeptide: Albumin-1 F (130 aa).

The N-terminal stretch at 1–26 (MASVKLASLIVLFATLGMFLTKNVGA) is a signal peptide. Disulfide bonds link C29–C46, C33–C48, and C41–C58. 2 propeptides span residues 64-69 (VFLRTN) and 123-130 (LLKSVSTA).

The C-terminal glycine may be removed from PA1b.

Functionally, PA1b binds to basic 7S globulin (BG) and stimulates its phosphorylation activity. Involved in the signal transduction system to regulate the growth and differentiation as a hormone peptide. Toxic to various insects through binding to a high affinity binding site in the insect gut. This chain is Albumin-1 F, found in Pisum sativum (Garden pea).